A 540-amino-acid polypeptide reads, in one-letter code: T-complex protein 1 subunit delta (540 aa).

A compositionally biased stretch (low complexity) spans 1–12 (MPPAVPAAAATA). Positions 1-32 (MPPAVPAAAATARQSASGRERNFKDKDKPESV) are disordered. The segment covering 18–31 (GRERNFKDKDKPES) has biased composition (basic and acidic residues).

The protein belongs to the TCP-1 chaperonin family. In terms of assembly, heterooligomeric complex of about 850 to 900 kDa that forms two stacked rings, 12 to 16 nm in diameter.

It localises to the cytoplasm. In terms of biological role, molecular chaperone; assists the folding of proteins upon ATP hydrolysis. Known to play a role, in vitro, in the folding of actin and tubulin. This Caenorhabditis elegans protein is T-complex protein 1 subunit delta (cct-4).